We begin with the raw amino-acid sequence, 81 residues long: Photosystem I iron-sulfur center (81 aa).

4Fe-4S ferredoxin-type domains follow at residues 1 to 31 (MSHK…MVPW) and 39 to 68 (IASS…IRVY). Positions 11, 14, 17, 21, 48, 51, 54, and 58 each coordinate [4Fe-4S] cluster.

In terms of assembly, the cyanobacterial PSI reaction center is composed of one copy each of PsaA,B,C,D,E,F,I,J,K,L,M and X, and forms trimeric complexes. The cofactor is [4Fe-4S] cluster.

It localises to the cellular thylakoid membrane. It catalyses the reaction reduced [plastocyanin] + hnu + oxidized [2Fe-2S]-[ferredoxin] = oxidized [plastocyanin] + reduced [2Fe-2S]-[ferredoxin]. Functionally, apoprotein for the two 4Fe-4S centers FA and FB of photosystem I (PSI); essential for photochemical activity. FB is the terminal electron acceptor of PSI, donating electrons to ferredoxin. The C-terminus interacts with PsaA/B/D and helps assemble the protein into the PSI complex. Required for binding of PsaD and PsaE to PSI. PSI is a plastocyanin/cytochrome c6-ferredoxin oxidoreductase, converting photonic excitation into a charge separation, which transfers an electron from the donor P700 chlorophyll pair to the spectroscopically characterized acceptors A0, A1, FX, FA and FB in turn. The sequence is that of Photosystem I iron-sulfur center from Rippkaea orientalis (strain PCC 8801 / RF-1) (Cyanothece sp. (strain PCC 8801)).